Here is a 224-residue protein sequence, read N- to C-terminus: Phosphoribosylformylglycinamidine synthase subunit PurQ (224 aa).

Positions 2–224 constitute a Glutamine amidotransferase type-1 domain; it reads KVTILQFPGT…IKMLQGFLRA (223 aa). Catalysis depends on cysteine 86, which acts as the Nucleophile. Residues histidine 200 and glutamate 202 contribute to the active site.

In terms of assembly, part of the FGAM synthase complex composed of 1 PurL, 1 PurQ and 2 PurS subunits.

The protein resides in the cytoplasm. The catalysed reaction is N(2)-formyl-N(1)-(5-phospho-beta-D-ribosyl)glycinamide + L-glutamine + ATP + H2O = 2-formamido-N(1)-(5-O-phospho-beta-D-ribosyl)acetamidine + L-glutamate + ADP + phosphate + H(+). It carries out the reaction L-glutamine + H2O = L-glutamate + NH4(+). It functions in the pathway purine metabolism; IMP biosynthesis via de novo pathway; 5-amino-1-(5-phospho-D-ribosyl)imidazole from N(2)-formyl-N(1)-(5-phospho-D-ribosyl)glycinamide: step 1/2. Its function is as follows. Part of the phosphoribosylformylglycinamidine synthase complex involved in the purines biosynthetic pathway. Catalyzes the ATP-dependent conversion of formylglycinamide ribonucleotide (FGAR) and glutamine to yield formylglycinamidine ribonucleotide (FGAM) and glutamate. The FGAM synthase complex is composed of three subunits. PurQ produces an ammonia molecule by converting glutamine to glutamate. PurL transfers the ammonia molecule to FGAR to form FGAM in an ATP-dependent manner. PurS interacts with PurQ and PurL and is thought to assist in the transfer of the ammonia molecule from PurQ to PurL. The protein is Phosphoribosylformylglycinamidine synthase subunit PurQ of Sulfurimonas denitrificans (strain ATCC 33889 / DSM 1251) (Thiomicrospira denitrificans (strain ATCC 33889 / DSM 1251)).